The sequence spans 148 residues: 3-dehydroquinate dehydratase (148 aa).

Tyrosine 23 (proton acceptor) is an active-site residue. Residues asparagine 75, histidine 81, and aspartate 88 each contribute to the substrate site. Histidine 101 (proton donor) is an active-site residue. Substrate-binding positions include 102–103 and arginine 112; that span reads IS.

Belongs to the type-II 3-dehydroquinase family. Homododecamer.

It carries out the reaction 3-dehydroquinate = 3-dehydroshikimate + H2O. Its pathway is metabolic intermediate biosynthesis; chorismate biosynthesis; chorismate from D-erythrose 4-phosphate and phosphoenolpyruvate: step 3/7. Catalyzes a trans-dehydration via an enolate intermediate. This is 3-dehydroquinate dehydratase from Methylococcus capsulatus (strain ATCC 33009 / NCIMB 11132 / Bath).